Reading from the N-terminus, the 187-residue chain is UPF0398 protein SH1465 (187 aa).

The protein belongs to the UPF0398 family.

This chain is UPF0398 protein SH1465, found in Staphylococcus haemolyticus (strain JCSC1435).